The primary structure comprises 269 residues: Intercellular adhesion molecule 4 (269 aa).

Positions 1 to 20 (SLFPLSLLFFLAAAYPGVGS) are cleaved as a signal peptide. Residues 21–238 (ALGRRTKRAQ…MLAWSSAPTA (218 aa)) lie on the Extracellular side of the membrane. Ig-like C2-type domains are found at residues 60 to 122 (GKSV…TRWA) and 144 to 215 (GRKY…LNLD). Residues Asn66, Asn76, Asn188, and Asn221 are each glycosylated (N-linked (GlcNAc...) asparagine). Intrachain disulfides connect Cys67–Cys111, Cys67–Cys115, Cys71–Cys115, and Cys151–Cys208. A helical membrane pass occupies residues 239 to 259 (LASVSIAALVGILLTVGAAYL). The Cytoplasmic segment spans residues 260–269 (CKCLAMKSQA).

This sequence belongs to the immunoglobulin superfamily. ICAM family. In terms of processing, N- and O-glycosylated.

The protein resides in the cell membrane. In terms of biological role, ICAM proteins are ligands for the leukocyte adhesion protein LFA-1 (integrin alpha-L/beta-2). ICAM4 is also a ligand for alpha-4/beta-1 and alpha-V integrins. The polypeptide is Intercellular adhesion molecule 4 (ICAM4) (Pan troglodytes (Chimpanzee)).